We begin with the raw amino-acid sequence, 629 residues long: Mitochondrial Rho GTPase 1 (629 aa).

Residues 1–600 are Cytoplasmic-facing; it reads MSTAVRICVC…PRSEEPPADR (600 aa). In terms of domain architecture, Miro 1 spans 2–170; sequence STAVRICVCG…FYLCQKAVTH (169 aa). GTP-binding positions include 11-18, 59-63, and 115-118; these read GDEGTGKS, DTSAR, and NKSD. EF-hand domains lie at 186-221 and 306-341; these read ACVDALRRIFFLSDKDQDGYLNDQEMQDFQQKSFDK and AGYRFFMDLFLTFDKDNDGGLNDRELAALFAPTPGL. Residues aspartate 199, aspartate 201, aspartate 203, tyrosine 205, glutamate 210, aspartate 319, aspartate 321, aspartate 323, and glutamate 330 each coordinate Ca(2+). Residues 421-585 form the Miro 2 domain; that stretch reads RNVVLCYILG…FVALAEAATN (165 aa). GTP-binding positions include 430–437, 466–470, and 535–538; these read GSSGAGKS, ELQGG, and LKAD. A helical; Anchor for type IV membrane protein membrane pass occupies residues 601–621; it reads ASLYMALGATACAALAAFMIW. Residues 622-629 lie on the Mitochondrial intermembrane side of the membrane; that stretch reads RRSTSNAA.

It belongs to the mitochondrial Rho GTPase family.

It is found in the mitochondrion outer membrane. Its function is as follows. Mitochondrial GTPase involved in mitochondrial trafficking. Probably involved in control of anterograde transport of mitochondria and their subcellular distribution. The protein is Mitochondrial Rho GTPase 1 (gem-1) of Neurospora crassa (strain ATCC 24698 / 74-OR23-1A / CBS 708.71 / DSM 1257 / FGSC 987).